A 337-amino-acid polypeptide reads, in one-letter code: Diacylglycerol O-acyltransferase 2-like protein 6 (337 aa).

2 helical membrane-spanning segments follow: residues 22 to 42 and 102 to 122; these read IPVYVLLGTLSILGMPYLLLF and YIILSHPHGILSYGAFINFAT.

Belongs to the diacylglycerol acyltransferase family.

It is found in the endoplasmic reticulum membrane. It catalyses the reaction 1,2-di-(9Z-octadecenoyl)-sn-glycerol + (9Z)-octadecenoyl-CoA = 1,2,3-tri-(9Z-octadecenoyl)-glycerol + CoA. Its function is as follows. Diglyceride acyltransferase that uses fatty acyl-CoA as substrate. Particularly active with oleate as a substrate. Has no wax synthase activity to produce wax esters. The protein is Diacylglycerol O-acyltransferase 2-like protein 6 (Dgat2l6) of Mus musculus (Mouse).